The chain runs to 262 residues: MFPRLPTLALGALLLASTPLLAAQPVTTLTVLSSGGIMGTIREVAPAYEKATGVKLDIAAAPSMGDTPQAIPNRLARNEPADVVLMVGSALDKLVASGQVAKDSRVDLGQSFIAMAVRQGAPKPDISNMDAFKQTLEKAQSVAYSDSASGVYLSRILFPRMQLDKSFMAKARMIPAEPVGAVVARGEAQLGFQQLSELKAVPGIDIVGLIPDQAQKMTLYSGAMVSKSQHPEAARALLQYLASKDAAKAIEDSGLKPVPAQP.

A signal peptide spans 1-22 (MFPRLPTLALGALLLASTPLLA).

As to quaternary structure, monomer.

It carries out the reaction trans-aconitate = cis-aconitate. Activated more than 1.5 fold by Ca(2+), Mg(2+), Mn(2+), Ni(2+), Fe(2+), DDT and 1,10-phenanthroline. Strongly inhibited by Ag(+) and Hg(+). Inhibited by addition of 20% (v/v) glycerol. No effect by addition of NADH or NADPH. Its function is as follows. Involved in assimilation of trans-aconitic acid. Preference for cis-aconitic acid is 14-fold higher than for trans-aconitic acid. Not active on intermediates of tricarboxylic acid (TCA) cycle including citric acid, succinic acid, fumaric acid, and 2-oxoglutaric acid or on other dicarboxilic acids including itaconic acid, formic acid, citraconic acid or maleic acid. The sequence is that of Aconitate isomerase from Pseudomonas sp.